The chain runs to 316 residues: Lipoyl synthase (316 aa).

[4Fe-4S] cluster contacts are provided by cysteine 66, cysteine 71, cysteine 77, cysteine 92, cysteine 96, cysteine 99, and serine 306. A Radical SAM core domain is found at 78-295 (YSQQTATFMV…ADIAKSMGFK (218 aa)).

The protein belongs to the radical SAM superfamily. Lipoyl synthase family. It depends on [4Fe-4S] cluster as a cofactor.

It localises to the cytoplasm. The enzyme catalyses [[Fe-S] cluster scaffold protein carrying a second [4Fe-4S](2+) cluster] + N(6)-octanoyl-L-lysyl-[protein] + 2 oxidized [2Fe-2S]-[ferredoxin] + 2 S-adenosyl-L-methionine + 4 H(+) = [[Fe-S] cluster scaffold protein] + N(6)-[(R)-dihydrolipoyl]-L-lysyl-[protein] + 4 Fe(3+) + 2 hydrogen sulfide + 2 5'-deoxyadenosine + 2 L-methionine + 2 reduced [2Fe-2S]-[ferredoxin]. It participates in protein modification; protein lipoylation via endogenous pathway; protein N(6)-(lipoyl)lysine from octanoyl-[acyl-carrier-protein]: step 2/2. In terms of biological role, catalyzes the radical-mediated insertion of two sulfur atoms into the C-6 and C-8 positions of the octanoyl moiety bound to the lipoyl domains of lipoate-dependent enzymes, thereby converting the octanoylated domains into lipoylated derivatives. This chain is Lipoyl synthase, found in Rhodopirellula baltica (strain DSM 10527 / NCIMB 13988 / SH1).